A 219-amino-acid polypeptide reads, in one-letter code: 2-phospho-L-lactate guanylyltransferase (219 aa).

Belongs to the CofC family. In terms of assembly, homodimer.

The catalysed reaction is (2S)-2-phospholactate + GTP + H(+) = (2S)-lactyl-2-diphospho-5'-guanosine + diphosphate. Its pathway is cofactor biosynthesis; coenzyme F420 biosynthesis. Functionally, guanylyltransferase that catalyzes the activation of (2S)-2-phospholactate (2-PL) as (2S)-lactyl-2-diphospho-5'-guanosine, via the condensation of 2-PL with GTP. It is involved in the biosynthesis of coenzyme F420, a hydride carrier cofactor. The chain is 2-phospho-L-lactate guanylyltransferase from Methanocella arvoryzae (strain DSM 22066 / NBRC 105507 / MRE50).